The chain runs to 372 residues: Alanine dehydrogenase (372 aa).

The substrate site is built by arginine 15 and lysine 75. Residue histidine 96 is the Proton donor/acceptor of the active site. Residues serine 134, 178-179, aspartate 198, serine 220, 239-240, 267-270, arginine 280, and 299-302 each bind NAD(+); these read IA, VL, IAID, and VANM. Aspartate 270 functions as the Proton donor/acceptor in the catalytic mechanism.

This sequence belongs to the AlaDH/PNT family. As to quaternary structure, homohexamer.

It is found in the cytoplasm. It catalyses the reaction L-alanine + NAD(+) + H2O = pyruvate + NH4(+) + NADH + H(+). The protein operates within amino-acid degradation; L-alanine degradation via dehydrogenase pathway; NH(3) and pyruvate from L-alanine: step 1/1. Its activity is regulated as follows. Inhibited by p-chloromercuribenzoate and HgCl(2) and by Cu(2+) and Pb(2+) salts, unaffected by amino acids such as D-alanine and beta-alanine or by nucleotides or nucleosides. In terms of biological role, catalyzes the reversible reductive amination of pyruvate to L-alanine. Prefers L-alanine for oxidative deamination, other substrates are poorly reactive. In the other direction 2-oxobutyrate is almost as reactive as pyruvate. Ammonia is the sole amino donor for the reductive amination of pyruvate, NADPH is inert. Reductive amination proceeds through a sequential, ordered ternary-binary mechanism, where NADH binds first followed by ammonia and pyruvate; the products are released in the order L-alanine and NAD(+). A key factor in the assimilation of L-alanine as an energy source via the tricarboxylic acid cycle during sporulation. In Lysinibacillus sphaericus (Bacillus sphaericus), this protein is Alanine dehydrogenase (ald).